An 86-amino-acid chain; its full sequence is RNA-binding protein Hfq (86 aa).

The Sm domain occupies 9–68 (DPYLNTLRKERVPVSIYLVNGIKLQGQIESFDQFVILLKNTVSQMVYKHAISTVVPSRPV). A disordered region spans residues 66–86 (RPVRLPSAGDSEQADAEPGNA).

Belongs to the Hfq family. As to quaternary structure, homohexamer.

Its function is as follows. RNA chaperone that binds small regulatory RNA (sRNAs) and mRNAs to facilitate mRNA translational regulation in response to envelope stress, environmental stress and changes in metabolite concentrations. Also binds with high specificity to tRNAs. This chain is RNA-binding protein Hfq, found in Ectopseudomonas mendocina (strain ymp) (Pseudomonas mendocina).